The following is a 182-amino-acid chain: Dephospho-CoA kinase (182 aa).

The region spanning 4–182 is the DPCK domain; that stretch reads VVAITGGIGS…IINNDHKIMT (179 aa). 12–17 contributes to the ATP binding site; the sequence is GSGKTT.

The protein belongs to the CoaE family.

The protein resides in the cytoplasm. It catalyses the reaction 3'-dephospho-CoA + ATP = ADP + CoA + H(+). It functions in the pathway cofactor biosynthesis; coenzyme A biosynthesis; CoA from (R)-pantothenate: step 5/5. Its function is as follows. Catalyzes the phosphorylation of the 3'-hydroxyl group of dephosphocoenzyme A to form coenzyme A. The chain is Dephospho-CoA kinase from Aliivibrio fischeri (strain ATCC 700601 / ES114) (Vibrio fischeri).